A 205-amino-acid chain; its full sequence is DNA-directed RNA polymerase RPB5 homolog (205 aa).

The protein belongs to the archaeal RpoH/eukaryotic RPB5 RNA polymerase subunit family. As to quaternary structure, part of the viral DNA-directed RNA polymerase that consists of 8 polII-like subunits (RPB1, RPB2, RPB3, RPB5, RPB6, RPB7, RPB9, RPB10), a capping enzyme and a termination factor.

It localises to the host cytoplasm. Its subcellular location is the virion. Component of the DNA-directed RNA polymerase (RNAP) that catalyzes the transcription in the cytoplasm of viral DNA into RNA using the four ribonucleoside triphosphates as substrates. The chain is DNA-directed RNA polymerase RPB5 homolog from Ornithodoros (relapsing fever ticks).